Reading from the N-terminus, the 521-residue chain is NAD(P)H-quinone oxidoreductase subunit 2 (521 aa).

The next 14 helical transmembrane spans lie at 14–34, 42–62, 79–99, 109–129, 132–152, 167–187, 207–227, 241–261, 275–295, 303–323, 331–351, 375–395, 397–417, and 463–483; these read VILP…TDLI, LTPA…TLQW, LSIV…LLSI, LGEF…LSGA, LVTI…LTGY, LLIG…LYGL, LALL…ISAV, PTPI…ALAI, WHFV…VVAL, LLAY…IAGT, VYYL…VILF, LGLS…GFFG, LYLF…LALI, and AGLV…NPLF.

This sequence belongs to the complex I subunit 2 family. As to quaternary structure, NDH-1 can be composed of about 15 different subunits; different subcomplexes with different compositions have been identified which probably have different functions.

The protein resides in the cellular thylakoid membrane. The catalysed reaction is a plastoquinone + NADH + (n+1) H(+)(in) = a plastoquinol + NAD(+) + n H(+)(out). It catalyses the reaction a plastoquinone + NADPH + (n+1) H(+)(in) = a plastoquinol + NADP(+) + n H(+)(out). Its function is as follows. NDH-1 shuttles electrons from an unknown electron donor, via FMN and iron-sulfur (Fe-S) centers, to quinones in the respiratory and/or the photosynthetic chain. The immediate electron acceptor for the enzyme in this species is believed to be plastoquinone. Couples the redox reaction to proton translocation, and thus conserves the redox energy in a proton gradient. Cyanobacterial NDH-1 also plays a role in inorganic carbon-concentration. This is NAD(P)H-quinone oxidoreductase subunit 2 from Synechococcus elongatus (strain ATCC 33912 / PCC 7942 / FACHB-805) (Anacystis nidulans R2).